We begin with the raw amino-acid sequence, 88 residues long: FXYD domain-containing ion transport regulator 3 (88 aa).

A signal peptide spans 1–17; that stretch reads MHEVALSVLILLAGLSA. Over 18-38 the chain is Extracellular; that stretch reads LDANDPEDKNSPFYYDWHSLR. Residues 39 to 59 traverse the membrane as a helical segment; it reads VGGLICAGTPCALGIIILLSG. Topologically, residues 60-88 are cytoplasmic; that stretch reads KCKCKFSQKPSHRPGDAPPLITPGSAHDC. Positions 66–88 are disordered; it reads SQKPSHRPGDAPPLITPGSAHDC.

This sequence belongs to the FXYD family. In terms of assembly, regulatory subunit of the sodium/potassium-transporting ATPase which is composed of a catalytic alpha subunit, a non-catalytic beta subunit and an additional regulatory subunit. Interacts with catalytic alpha subunit ATP1A1. Also interacts with non-catalytic beta subunit ATP1B1. Interacts with the alpha1-beta1, alpha2-beta1 and alpha3-beta1 NKA isozymes. In terms of processing, glutathionylated.

The protein resides in the cell membrane. Its function is as follows. Associates with and regulates the activity of the sodium/potassium-transporting ATPase (NKA) which transports Na(+) out of the cell and K(+) into the cell. Reduces glutathionylation of the NKA beta-1 subunit ATP1B1, thus reversing glutathionylation-mediated inhibition of ATP1B1. Induces a hyperpolarization-activated chloride current when expressed in Xenopus oocytes. In Sus scrofa (Pig), this protein is FXYD domain-containing ion transport regulator 3 (FXYD3).